The sequence spans 383 residues: Thioredoxin reductase 2 (383 aa).

FAD-binding positions include serine 66–alanine 69, phenylalanine 87–glutamate 88, isoleucine 95–glutamine 100, asparagine 109, valine 142, cysteine 200, aspartate 345, and arginine 352–alanine 354. A disulfide bond links cysteine 197 and cysteine 200.

The protein belongs to the class-II pyridine nucleotide-disulfide oxidoreductase family. As to quaternary structure, homodimer. FAD serves as cofactor.

Its subcellular location is the cytoplasm. The protein resides in the mitochondrion matrix. The catalysed reaction is [thioredoxin]-dithiol + NADP(+) = [thioredoxin]-disulfide + NADPH + H(+). Its function is as follows. Possesses thioredoxin-disulfide reductase activity towards thioredoxins O1, O2 and F3. In Arabidopsis thaliana (Mouse-ear cress), this protein is Thioredoxin reductase 2 (NTR2).